A 277-amino-acid polypeptide reads, in one-letter code: Probable endonuclease 4 (277 aa).

The Zn(2+) site is built by histidine 67, histidine 107, glutamate 142, aspartate 176, histidine 179, histidine 211, aspartate 224, histidine 226, and glutamate 256.

This sequence belongs to the AP endonuclease 2 family. It depends on Zn(2+) as a cofactor.

The enzyme catalyses Endonucleolytic cleavage to 5'-phosphooligonucleotide end-products.. Functionally, endonuclease IV plays a role in DNA repair. It cleaves phosphodiester bonds at apurinic or apyrimidinic (AP) sites, generating a 3'-hydroxyl group and a 5'-terminal sugar phosphate. This Akkermansia muciniphila (strain ATCC BAA-835 / DSM 22959 / JCM 33894 / BCRC 81048 / CCUG 64013 / CIP 107961 / Muc) protein is Probable endonuclease 4.